Consider the following 316-residue polypeptide: Pantothenate kinase (316 aa).

Position 95–102 (95–102 (GSVAVGKS)) interacts with ATP.

This sequence belongs to the prokaryotic pantothenate kinase family.

The protein resides in the cytoplasm. The catalysed reaction is (R)-pantothenate + ATP = (R)-4'-phosphopantothenate + ADP + H(+). The protein operates within cofactor biosynthesis; coenzyme A biosynthesis; CoA from (R)-pantothenate: step 1/5. The polypeptide is Pantothenate kinase (Pectobacterium carotovorum subsp. carotovorum (strain PC1)).